Here is a 418-residue protein sequence, read N- to C-terminus: MTLQDEIKQLAKEARDASRTLAQVSTTVKNDLLKGMADALVAATTALMAENAKDLEAGREKGLSDAMLDRLRLDEARIQGMADGLREVAELPDPVGEVTGMWRRPNGIQVGRMRIPLGVIGIIYESRPNVTADAAGLCLKSGNAVVLRGGSEAIHSNRAIAGVLKGVLAALGLPAGALQLVGTTDRAAVTELLKQEDYIDLIIPRGGEGLIRFVSENSRIPVIKHYKGVCHSFVDADADFDMAEKICVNAKVQRPGVCNAMETLLIHKDAAEVFVPRIARVLGELGVELRGCAETCRLAPGTTPAVDSDWGAEYLDLILAVKVVDGLDAAIAHIQQYSSLHTEVIVTRNYPNSQRFLREINSSVVMVNASSRFSDGNQFGLGAEIGISTTKLHSFGPMGLEDLTTRKFIVFGEGQVRE.

Belongs to the gamma-glutamyl phosphate reductase family.

The protein resides in the cytoplasm. It carries out the reaction L-glutamate 5-semialdehyde + phosphate + NADP(+) = L-glutamyl 5-phosphate + NADPH + H(+). Its pathway is amino-acid biosynthesis; L-proline biosynthesis; L-glutamate 5-semialdehyde from L-glutamate: step 2/2. Catalyzes the NADPH-dependent reduction of L-glutamate 5-phosphate into L-glutamate 5-semialdehyde and phosphate. The product spontaneously undergoes cyclization to form 1-pyrroline-5-carboxylate. The polypeptide is Gamma-glutamyl phosphate reductase (Syntrophotalea carbinolica (strain DSM 2380 / NBRC 103641 / GraBd1) (Pelobacter carbinolicus)).